The chain runs to 355 residues: Protein RecA (355 aa).

66 to 73 serves as a coordination point for ATP; it reads GPESSGKT. A disordered region spans residues 331-355; it reads DVPEEDLPTTEDEQINILPDDSTEE. The span at 332–344 shows a compositional bias: acidic residues; it reads VPEEDLPTTEDEQ.

This sequence belongs to the RecA family.

The protein resides in the cytoplasm. Can catalyze the hydrolysis of ATP in the presence of single-stranded DNA, the ATP-dependent uptake of single-stranded DNA by duplex DNA, and the ATP-dependent hybridization of homologous single-stranded DNAs. It interacts with LexA causing its activation and leading to its autocatalytic cleavage. This chain is Protein RecA, found in Latilactobacillus sakei subsp. sakei (strain 23K) (Lactobacillus sakei subsp. sakei).